Here is a 312-residue protein sequence, read N- to C-terminus: MKALWALLLVPLLTGCLAEGELEVTDQLPGQSNQPWEQALNRFWDYLRWVQTLSDQVQEELQSSQVTQELTVLMEDTMTEVKAYKKELEEQLGPVAEETRARLAKEVQAAQARLGADMEDLRNRLGQYRNEVNTMLGQSTEELRSRLSTHLRKMRKRLMRDADDLQKRLAVYKAGAQEGAERGVSAIRERLGPLVEQGRQRTANLGSGAAQPLRDRAQALSDRIRGRLEEVGNQARDRLEEVRDQMEDVRSKMEEQTQQIRLQAEVFQARLKGWFEPLVEDMQRQWANLMEKIQASVATNSIASTTVPLENQ.

An N-terminal signal peptide occupies residues 1-18 (MKALWALLLVPLLTGCLA). 8 repeat units span residues 72–93 (VLME…EQLG), 94–115 (PVAE…ARLG), 116–137 (ADME…TMLG), 138–159 (QSTE…KRLM), 160–181 (RDAD…EGAE), 182–203 (RGVS…QRTA), 204–225 (NLGS…DRIR), and 226–247 (GRLE…DQME). Residues 72–247 (VLMEDTMTEV…RLEEVRDQME (176 aa)) are 8 X 22 AA approximate tandem repeats. Met135 bears the Methionine sulfoxide mark. Phosphoserine is present on Ser139. The interval 150-160 (HLRKMRKRLMR) is LDL and other lipoprotein receptors binding. Residues 150–160 (HLRKMRKRLMR) form an LDL receptor binding region. 154-157 (MRKR) contributes to the heparin binding site. The segment at 202 to 282 (TANLGSGAAQ…GWFEPLVEDM (81 aa)) is lipid-binding and lipoprotein association. Heparin is bound at residue 221–228 (SDRIRGRL). Residues 258-312 (QQIRLQAEVFQARLKGWFEPLVEDMQRQWANLMEKIQASVATNSIASTTVPLENQ) are homooligomerization. The interval 270-282 (RLKGWFEPLVEDM) is specificity for association with VLDL.

Belongs to the apolipoprotein A1/A4/E family. As to quaternary structure, homotetramer. May interact with ABCA1; functionally associated with ABCA1 in the biogenesis of HDLs. May interact with APP/A4 amyloid-beta peptide; the interaction is extremely stable in vitro but its physiological significance is unclear. May interact with MAPT. May interact with MAP2. In the cerebrospinal fluid, interacts with secreted SORL1. Interacts with PMEL; this allows the loading of PMEL luminal fragment on ILVs to induce fibril nucleation. APOE exists as multiple glycosylated and sialylated glycoforms within cells and in plasma. The extent of glycosylation and sialylation are tissue and context specific. Post-translationally, glycated in plasma VLDL. In terms of processing, phosphorylated by FAM20C in the extracellular medium.

Its subcellular location is the secreted. It localises to the extracellular space. The protein localises to the extracellular matrix. It is found in the extracellular vesicle. The protein resides in the endosome. Its subcellular location is the multivesicular body. Its function is as follows. APOE is an apolipoprotein, a protein associating with lipid particles, that mainly functions in lipoprotein-mediated lipid transport between organs via the plasma and interstitial fluids. APOE is a core component of plasma lipoproteins and is involved in their production, conversion and clearance. Apolipoproteins are amphipathic molecules that interact both with lipids of the lipoprotein particle core and the aqueous environment of the plasma. As such, APOE associates with chylomicrons, chylomicron remnants, very low density lipoproteins (VLDL) and intermediate density lipoproteins (IDL) but shows a preferential binding to high-density lipoproteins (HDL). It also binds a wide range of cellular receptors including the LDL receptor/LDLR, the LDL receptor-related proteins LRP1, LRP2 and LRP8 and the very low-density lipoprotein receptor/VLDLR that mediate the cellular uptake of the APOE-containing lipoprotein particles. Finally, APOE also has a heparin-binding activity and binds heparan-sulfate proteoglycans on the surface of cells, a property that supports the capture and the receptor-mediated uptake of APOE-containing lipoproteins by cells. A main function of APOE is to mediate lipoprotein clearance through the uptake of chylomicrons, VLDLs, and HDLs by hepatocytes. APOE is also involved in the biosynthesis by the liver of VLDLs as well as their uptake by peripheral tissues ensuring the delivery of triglycerides and energy storage in muscle, heart and adipose tissues. By participating in the lipoprotein-mediated distribution of lipids among tissues, APOE plays a critical role in plasma and tissues lipid homeostasis. APOE is also involved in two steps of reverse cholesterol transport, the HDLs-mediated transport of cholesterol from peripheral tissues to the liver, and thereby plays an important role in cholesterol homeostasis. First, it is functionally associated with ABCA1 in the biogenesis of HDLs in tissues. Second, it is enriched in circulating HDLs and mediates their uptake by hepatocytes. APOE also plays an important role in lipid transport in the central nervous system, regulating neuron survival and sprouting. This is Apolipoprotein E (Apoe) from Rattus rattus (Black rat).